The primary structure comprises 372 residues: tRNA-specific 2-thiouridylase MnmA (372 aa).

Residues 11–18 (GMSGGVDS) and methionine 37 each bind ATP. Residues 97 to 99 (NPD) form an interaction with target base in tRNA region. Cysteine 102 (nucleophile) is an active-site residue. Cysteine 102 and cysteine 199 are disulfide-bonded. An ATP-binding site is contributed by glycine 126. The interval 149 to 151 (KDQ) is interaction with tRNA. The Cysteine persulfide intermediate role is filled by cysteine 199. The segment at 309–310 (RY) is interaction with tRNA.

This sequence belongs to the MnmA/TRMU family.

It localises to the cytoplasm. The enzyme catalyses S-sulfanyl-L-cysteinyl-[protein] + uridine(34) in tRNA + AH2 + ATP = 2-thiouridine(34) in tRNA + L-cysteinyl-[protein] + A + AMP + diphosphate + H(+). Its function is as follows. Catalyzes the 2-thiolation of uridine at the wobble position (U34) of tRNA, leading to the formation of s(2)U34. This Staphylococcus aureus (strain MSSA476) protein is tRNA-specific 2-thiouridylase MnmA.